A 711-amino-acid polypeptide reads, in one-letter code: MFNQVKKTMEWGEDTLTLETGKIARQADGCVIATYGETSVMAAVTYARSQKPGQDFFPLTVHYNEKYYAAGKIPGGFFKREARPTEKETLTSRLIDRPIRPLFVDGFKNEVLVICTVLSHDLENDPDIVAMIAASAALTISGVPFMGPIAGARVGYEDGEYVLNPVVDDMHDLRNNPDQRLDLVVAGTKDAVMMVESEAYELSEAEMLGAVKFGHEQMQPVIDLIIELAETAAKEPFDFQPADYSELYAKVKAAGEDQMRAAFAITDKQERVTAISAARDAILATLSDEEQTDPNLGSALKKLESSILRGDVVKNGRRIDGRALDTVRPIQSEVGILPRTHGSALFTRGETQGLVVTTLGTGDDEQFIDALHGNFKSNFLLHYNFPPYSVGEVGRFGPPGRREIGHGKLAWRALQAVLPAATDFPYTIRLVSEITESNGSSSMASVCGGSLSMMDAGVPLKAPVAGVAMGLILEEDGSYAVLTDILGDEDHLGDMDFKVAGTEEGITSLQMDIKVAGITPEIMEKALEQAKAGRLHILGEMSKALSEGRSQFSEHAPRIETMQIPTDKIREVIGSGGKVIREIVETSGAKVDINDDGIIKIASANGEAIKKAYEMIHSIVAEPEEGKVYTGTVVKIVDFGAFVNFFGKRDGLVHVSQIENRRLNHPSDVLKEGQEVKVKLLGFDDRGKVRLSMKVVDQETGEEIKKEAPAD.

Mg(2+) is bound by residues D490 and D496. Positions 557-616 (PRIETMQIPTDKIREVIGSGGKVIREIVETSGAKVDINDDGIIKIASANGEAIKKAYEMI) constitute a KH domain. Residues 626-694 (GKVYTGTVVK…DRGKVRLSMK (69 aa)) enclose the S1 motif domain.

It belongs to the polyribonucleotide nucleotidyltransferase family. Requires Mg(2+) as cofactor.

The protein resides in the cytoplasm. It catalyses the reaction RNA(n+1) + phosphate = RNA(n) + a ribonucleoside 5'-diphosphate. In terms of biological role, involved in mRNA degradation. Catalyzes the phosphorolysis of single-stranded polyribonucleotides processively in the 3'- to 5'-direction. This chain is Polyribonucleotide nucleotidyltransferase, found in Dinoroseobacter shibae (strain DSM 16493 / NCIMB 14021 / DFL 12).